The following is a 155-amino-acid chain: Ribosomal RNA large subunit methyltransferase H (155 aa).

S-adenosyl-L-methionine is bound by residues Leu72, Gly103, and 122-127 (LSDLTL).

This sequence belongs to the RNA methyltransferase RlmH family. In terms of assembly, homodimer.

The protein localises to the cytoplasm. It carries out the reaction pseudouridine(1915) in 23S rRNA + S-adenosyl-L-methionine = N(3)-methylpseudouridine(1915) in 23S rRNA + S-adenosyl-L-homocysteine + H(+). In terms of biological role, specifically methylates the pseudouridine at position 1915 (m3Psi1915) in 23S rRNA. The sequence is that of Ribosomal RNA large subunit methyltransferase H from Delftia acidovorans (strain DSM 14801 / SPH-1).